Consider the following 472-residue polypeptide: Mixed lineage kinase domain-like protein (472 aa).

Residues 1–143 (MDKLGQIIKL…QEDRQDAEED (143 aa)) are N-terminal bundle and brace (NBB); mediates INSP6 binding. The stretch at 61-81 (LGRFDEVLKEANQQIEKFSKK) forms a coiled coil. Residue Ser-124 is modified to Phosphoserine. Positions 138–229 (QDAEEDGNEN…VFNNPQAESV (92 aa)) form a coiled coil. In terms of domain architecture, Protein kinase spans 192–456 (GPPWTKLKTS…DGRSLSGRER (265 aa)). ATP contacts are provided by residues 198-206 (LKTSKMSTI) and Lys-219. 2 positions are modified to phosphoserine; by RIPK3: Ser-345 and Ser-347. The residue at position 349 (Thr-349) is a Phosphothreonine; by RIPK3. Ser-352 is subject to Phosphoserine; by RIPK3.

This sequence belongs to the protein kinase superfamily. In terms of assembly, homooligomer. Homotrimer; forms homotrimers on necroptosis induction. Upon TNF-induced necrosis, forms in complex with PGAM5, RIPK1 and RIPK3. Within this complex, may play a role in the proper targeting of RIPK1-RIPK3 to its downstream effector PGAM5. Interacts with RIPK3; the interaction is direct and promotes its phosphorylation and subsequent activation. Post-translationally, phosphorylation by RIPK3 induces a conformational switch that is required for necroptosis. It also induces homotrimerization and localization to the plasma membrane. Highly expressed in thymus, colon, intestine, liver, spleen and lung. Expressed at much lower level in skeletal muscle, heart and kidney. Not detected in brain.

The protein localises to the cytoplasm. It is found in the cell membrane. It localises to the nucleus. Its activity is regulated as follows. Activated via binding to highly phosphorylated inositol phosphates such as inositolhexakisphosphate (InsP6) which mediates the release of an N-terminal auto-inhibitory region. Activation requires not only RIPK3-dependent phosphorylation but also binding to highly phosphorylated inositol phosphates. Functionally, pseudokinase that plays a key role in TNF-induced necroptosis, a programmed cell death process. Does not have protein kinase activity. Activated following phosphorylation by RIPK3, leading to homotrimerization, localization to the plasma membrane and execution of programmed necrosis characterized by calcium influx and plasma membrane damage. In addition to TNF-induced necroptosis, necroptosis can also take place in the nucleus in response to orthomyxoviruses infection: following ZBP1 activation, which senses double-stranded Z-RNA structures, nuclear RIPK3 catalyzes phosphorylation and activation of MLKL, promoting disruption of the nuclear envelope and leakage of cellular DNA into the cytosol. Binds to highly phosphorylated inositol phosphates such as inositolhexakisphosphate (InsP6) which is essential for its necroptotic function. This Mus musculus (Mouse) protein is Mixed lineage kinase domain-like protein.